The sequence spans 63 residues: Keratin-associated protein 19-7 (63 aa).

The protein belongs to the KRTAP type 19 family. As to quaternary structure, interacts with hair keratins.

In the hair cortex, hair keratin intermediate filaments are embedded in an interfilamentous matrix, consisting of hair keratin-associated proteins (KRTAP), which are essential for the formation of a rigid and resistant hair shaft through their extensive disulfide bond cross-linking with abundant cysteine residues of hair keratins. The matrix proteins include the high-sulfur and high-glycine-tyrosine keratins. The sequence is that of Keratin-associated protein 19-7 (KRTAP19-7) from Homo sapiens (Human).